The primary structure comprises 355 residues: Nuclear hormone receptor family member nhr-127 (355 aa).

The segment at residues 10–86 (SIPCEVCKNQ…AGMKAEKIQK (77 aa)) is a DNA-binding region (nuclear receptor). 2 consecutive NR C4-type zinc fingers follow at residues 13-33 (CEVC…CGAC) and 49-69 (CKDG…CRYC). The 230-residue stretch at 126–355 (NPHNASEGCS…IVQIVQNNFY (230 aa)) folds into the NR LBD domain.

The protein belongs to the nuclear hormone receptor family.

The protein localises to the nucleus. Its function is as follows. Orphan nuclear receptor. May play a role in modulation of lifespan and immunity. The protein is Nuclear hormone receptor family member nhr-127 (nhr-127) of Caenorhabditis elegans.